The primary structure comprises 385 residues: NifS/IcsS protein homolog (385 aa).

Residues 69 to 70 (GT), Asn149, Gln178, and 199 to 201 (SSH) contribute to the pyridoxal 5'-phosphate site. Lys202 carries the post-translational modification N6-(pyridoxal phosphate)lysine. Residue Thr237 coordinates pyridoxal 5'-phosphate. Cys325 serves as the catalytic Cysteine persulfide intermediate. Cys325 contributes to the [2Fe-2S] cluster binding site.

This sequence belongs to the class-V pyridoxal-phosphate-dependent aminotransferase family. NifS/IscS subfamily. Pyridoxal 5'-phosphate is required as a cofactor.

The chain is NifS/IcsS protein homolog from Lactobacillus delbrueckii subsp. bulgaricus (strain ATCC 11842 / DSM 20081 / BCRC 10696 / JCM 1002 / NBRC 13953 / NCIMB 11778 / NCTC 12712 / WDCM 00102 / Lb 14).